Reading from the N-terminus, the 461-residue chain is Tubulin gamma-2 chain (461 aa).

142-148 (AGGTGSG) is a GTP binding site.

This sequence belongs to the tubulin family.

The protein localises to the cytoplasm. It is found in the cytoskeleton. The protein resides in the microtubule organizing center. It localises to the centrosome. In terms of biological role, tubulin is the major constituent of microtubules. The gamma chain is found at microtubule organizing centers (MTOC) such as the spindle poles or the centrosome, suggesting that it is involved in the minus-end nucleation of microtubule assembly. The protein is Tubulin gamma-2 chain of Euplotoides octocarinatus (Freshwater ciliate).